A 666-amino-acid chain; its full sequence is Probable potassium transport system protein Kup (666 aa).

12 consecutive transmembrane segments (helical) span residues 16 to 36, 58 to 78, 100 to 120, 141 to 161, 165 to 185, 221 to 241, 253 to 273, 294 to 314, 343 to 363, 373 to 393, 399 to 419, and 424 to 444; these read GFIIALGIVYGDIGTSPLYTM, ISLIIWTLTLITTIKYVLIAL, PWLIIPAMIGGATLLSDGALT, IYQNQTNVIITTLVILIVLFG, FGTGFIGKIFGPVMFIWFSFL, IFILGSIFLATTGAEALYSDL, WPFVKMCIVLSYCGQAAWILA, VYLVSLATLAAIIASQALISG, LYIPVINWILFAVTSCTVLAF, YGLAITITMLMTTILLKYYLI, PILAHLVMAFFALVEFIFFLA, and FMHGGYAVVILALAIVFVMFI.

It belongs to the HAK/KUP transporter (TC 2.A.72) family.

It is found in the cell membrane. It catalyses the reaction K(+)(in) + H(+)(in) = K(+)(out) + H(+)(out). Transport of potassium into the cell. Likely operates as a K(+):H(+) symporter. The protein is Probable potassium transport system protein Kup of Streptococcus pyogenes serotype M49 (strain NZ131).